A 358-amino-acid chain; its full sequence is Hydroxyproline O-arabinosyltransferase 2 (358 aa).

Residues 7–26 form a helical; Signal-anchor membrane-spanning segment; that stretch reads YFFPILMTLSLFLIIRYNYI.

Ubiquitous.

Its subcellular location is the golgi apparatus. The protein localises to the cis-Golgi network membrane. The enzyme catalyses trans-4-hydroxy-L-prolyl-[protein] + UDP-beta-L-arabinofuranose = O-(beta-L-arabinofuranosyl)-trans-4-hydroxy-L-prolyl-[protein] + UDP + H(+). Its function is as follows. Glycosyltransferase involved in the O-arabinosylation of several proteins including extensins and small signaling peptides. Catalyzes the transfer of the initial L-arabinose to the hydroxyl group of Hyp residues. Contributes redundantly with HPAT1 and HPAT3 to arabinosylation of EXT3. This chain is Hydroxyproline O-arabinosyltransferase 2, found in Arabidopsis thaliana (Mouse-ear cress).